The sequence spans 333 residues: D-fructose 1,6-bisphosphatase class 2/sedoheptulose 1,7-bisphosphatase (333 aa).

Residues D33, E57, D85, and E88 each contribute to the Mn(2+) site. Substrate contacts are provided by residues 88–90 (EGT), Y119, 164–166 (RTR), and 186–188 (DGD). Residue E213 coordinates Mn(2+).

It belongs to the FBPase class 2 family. As to quaternary structure, homotetramer. The cofactor is Mn(2+).

It catalyses the reaction beta-D-fructose 1,6-bisphosphate + H2O = beta-D-fructose 6-phosphate + phosphate. It carries out the reaction D-sedoheptulose 1,7-bisphosphate + H2O = D-sedoheptulose 7-phosphate + phosphate. It functions in the pathway carbohydrate biosynthesis; Calvin cycle. Functionally, catalyzes the hydrolysis of fructose 1,6-bisphosphate (Fru 1,6-P2) and sedoheptulose 1,7-bisphosphate (Sed 1,7-P2) to fructose 6-phosphate and sedoheptulose 7-phosphate, respectively. The sequence is that of D-fructose 1,6-bisphosphatase class 2/sedoheptulose 1,7-bisphosphatase from Prochlorococcus marinus (strain AS9601).